The chain runs to 133 residues: Large ribosomal subunit protein uL15 (133 aa).

The tract at residues 1 to 64 (MGLENLKPAK…QPLQRRLPKI (64 aa)) is disordered.

It belongs to the universal ribosomal protein uL15 family. In terms of assembly, part of the 50S ribosomal subunit.

Its function is as follows. Binds to the 23S rRNA. The chain is Large ribosomal subunit protein uL15 from Helicobacter pylori (strain Shi470).